The sequence spans 319 residues: Acetaldehyde dehydrogenase 1 (319 aa).

Residue C129 is the Acyl-thioester intermediate of the active site. Residues 160 to 168 (SAGPGTRAN) and N287 contribute to the NAD(+) site.

Belongs to the acetaldehyde dehydrogenase family.

It carries out the reaction acetaldehyde + NAD(+) + CoA = acetyl-CoA + NADH + H(+). The protein is Acetaldehyde dehydrogenase 1 of Burkholderia lata (strain ATCC 17760 / DSM 23089 / LMG 22485 / NCIMB 9086 / R18194 / 383).